The sequence spans 1782 residues: Vitellogenin receptor (1782 aa).

Residues 1 to 18 (MRFIVLLFICSFIYPCYV) form the signal peptide. The Extracellular portion of the chain corresponds to 19 to 1663 (SSIGFRRISK…SINFSRNTRN (1645 aa)). 3 consecutive LDL-receptor class A domains span residues 35-72 (KCEDGYFQCNSGECIPVDKKCDYIDHCIDGSDEDFECD), 81-118 (TCAKDQFKCKNQECIPAAKYCDMVNDCLDESDEHDGCV), and 122-157 (NCTNKFLCTDGHCINKEWVCDGRNDCPDGNDEWNCK). 6 cysteine pairs are disulfide-bonded: C36–C48, C43–C61, C55–C71, C82–C94, C89–C107, and C101–C117. N-linked (GlcNAc...) asparagine glycosylation is present at N122. Cystine bridges form between C123–C134, C129–C147, and C141–C156. An N-linked (GlcNAc...) asparagine glycan is attached at N159. The 40-residue stretch at 166 to 205 (SCKTENYQYMCANHRCISLKVVCDKKDDCGDGSDEGPGCT) folds into the LDL-receptor class A 4 domain. 3 disulfide bridges follow: C167–C181, C176–C194, and C188–C204. N-linked (GlcNAc...) asparagine glycosylation is found at N208 and N239. An EGF-like 1 domain is found at 208–243 (NCSSAGCQSNCHQTPKGSVCTCKPGYKLQKDNRTCN). The EGF-like; calcium-binding domain maps to 244–283 (DIDECQAYGICDQDCMNVPGSYACTCQREYYLENDKRTCK). Disulfide bonds link C248–C258, C254–C267, and C269–C282. LDL-receptor class B repeat units lie at residues 327–374 (DYVY…DWIT), 375–416 (KNIY…LPTQ), 417–460 (GKMY…DYPN), 461–501 (ERLY…TVFQ), and 502–544 (NKLY…DHSA). Residues 552 to 588 (PCYSNPCSQLCMLNQNKGYTCGCTLDKKLNADKHTCQ) enclose the EGF-like 2 domain. N-linked (GlcNAc...) asparagine glycans are attached at residues N702, N859, N896, and N923. The EGF-like 3 domain maps to 889–927 (DCQKNNGNCSHVCLPSLITSFICACPPGMELSNDNRTCI). LDL-receptor class A domains follow at residues 931–969 (ECSKNEYKCSEHNICIQRNQLCDGIENCPNGEDETSECR), 973–1009 (RCKENQFMCKNGDCIRLKDRCNSRYDCTDQSDEQNCE), 1012–1049 (KCKSDEFQCKFTETCIPKTKMCDSNPDCDDLSDEEDCR), 1052–1090 (ECTSNEFKCNNGKCIPNTFVCDNDNDCEDGEDEAAEKCY), and 1094–1131 (ACKMPKMFKCPNGDCISDSLLCNGINDCNDGSDEVHCL). Disulfide bonds link C932-C945, C939-C958, C952-C968, C974-C986, C981-C999, C993-C1008, C1013-C1026, C1020-C1039, C1033-C1048, C1053-C1065, C1060-C1078, C1072-C1089, C1095-C1108, C1103-C1121, and C1115-C1130. 2 N-linked (GlcNAc...) asparagine glycosylation sites follow: N1133 and N1140. 3 LDL-receptor class A domains span residues 1140-1177 (NCSLNEYRCLGTDICLPKNVRCDGKNDCPQSDDEQNCT), 1178-1214 (YCFENEFACDNKRCIPELWVCDKANDCGDNSDEKNCD), and 1225-1260 (ECDEFKCSVGTCLPYSKVCDGNRDCPDGSDETGKCQ). Intrachain disulfides connect C1141–C1154, C1148–C1167, C1161–C1176, C1179–C1191, C1186–C1204, C1198–C1213, C1226–C1236, C1231–C1249, and C1243–C1259. N-linked (GlcNAc...) asparagine glycosylation occurs at N1175. Positions 1262–1298 (ACTVNNFCKGMCYKTPAGAVCGCQSGYRLAVDMISCE) constitute an EGF-like 4 domain. 3 LDL-receptor class B repeats span residues 1385-1425 (DSVY…DWIT), 1471-1518 (RWLF…DHVK), and 1519-1561 (SKLY…FEQS). N1626, N1640, and N1656 each carry an N-linked (GlcNAc...) asparagine glycan. A helical membrane pass occupies residues 1664-1684 (ISGIYSITIIVLLVSVLLLCV). The Cytoplasmic segment spans residues 1685–1782 (YYYYQKNKLK…ALIYFVHNSK (98 aa)).

In terms of tissue distribution, expressed in ovaries of reproductive females.

It localises to the membrane. In terms of biological role, involved in uptake of vitellogenin by endocytosis. Expression is regulated by the juvenile hormone analog, methoprene (in vitro). This is Vitellogenin receptor from Solenopsis invicta (Red imported fire ant).